A 61-amino-acid chain; its full sequence is Small ribosomal subunit protein uS14 (61 aa).

Zn(2+)-binding residues include C24, C27, C40, and C43.

Belongs to the universal ribosomal protein uS14 family. Zinc-binding uS14 subfamily. In terms of assembly, part of the 30S ribosomal subunit. Contacts proteins S3 and S10. Zn(2+) is required as a cofactor.

Functionally, binds 16S rRNA, required for the assembly of 30S particles and may also be responsible for determining the conformation of the 16S rRNA at the A site. The polypeptide is Small ribosomal subunit protein uS14 (Rhodococcus erythropolis (strain PR4 / NBRC 100887)).